Consider the following 591-residue polypeptide: Aspartate--tRNA ligase (591 aa).

Residue glutamate 173 coordinates L-aspartate. Residues 197–200 (QLFK) are aspartate. Arginine 219 contacts L-aspartate. ATP is bound by residues 219–221 (RDE) and glutamine 228. Histidine 448 provides a ligand contact to L-aspartate. Position 482 (glutamate 482) interacts with ATP. Arginine 489 lines the L-aspartate pocket. 534 to 537 (GLDR) provides a ligand contact to ATP.

This sequence belongs to the class-II aminoacyl-tRNA synthetase family. Type 1 subfamily. In terms of assembly, homodimer.

Its subcellular location is the cytoplasm. The catalysed reaction is tRNA(Asp) + L-aspartate + ATP = L-aspartyl-tRNA(Asp) + AMP + diphosphate. Functionally, catalyzes the attachment of L-aspartate to tRNA(Asp) in a two-step reaction: L-aspartate is first activated by ATP to form Asp-AMP and then transferred to the acceptor end of tRNA(Asp). This chain is Aspartate--tRNA ligase, found in Shewanella sp. (strain MR-7).